Reading from the N-terminus, the 173-residue chain is Photosystem I assembly protein Ycf3 (173 aa).

TPR repeat units lie at residues 35 to 68 (AFVYYRDGMSAQAEGEYAEALEYYEEALTLEEDT), 72 to 105 (GYILYNMGLIYASNGDHNKALELYHQAIELNPRL), and 120 to 153 (GEKEKEAGDNEAGEALFDQAADYWIRAIRMAPNN).

The protein belongs to the Ycf3 family.

The protein localises to the cellular thylakoid membrane. Essential for the assembly of the photosystem I (PSI) complex. May act as a chaperone-like factor to guide the assembly of the PSI subunits. The chain is Photosystem I assembly protein Ycf3 from Nostoc punctiforme (strain ATCC 29133 / PCC 73102).